The primary structure comprises 122 residues: Large ribosomal subunit protein uL14 (122 aa).

It belongs to the universal ribosomal protein uL14 family. As to quaternary structure, part of the 50S ribosomal subunit. Forms a cluster with proteins L3 and L19. In the 70S ribosome, L14 and L19 interact and together make contacts with the 16S rRNA in bridges B5 and B8.

Its function is as follows. Binds to 23S rRNA. Forms part of two intersubunit bridges in the 70S ribosome. The sequence is that of Large ribosomal subunit protein uL14 from Macrococcus caseolyticus (strain JCSC5402) (Macrococcoides caseolyticum).